Here is a 204-residue protein sequence, read N- to C-terminus: Leucyl/phenylalanyl-tRNA--protein transferase (204 aa).

The protein belongs to the L/F-transferase family.

Its subcellular location is the cytoplasm. The enzyme catalyses N-terminal L-lysyl-[protein] + L-leucyl-tRNA(Leu) = N-terminal L-leucyl-L-lysyl-[protein] + tRNA(Leu) + H(+). It carries out the reaction N-terminal L-arginyl-[protein] + L-leucyl-tRNA(Leu) = N-terminal L-leucyl-L-arginyl-[protein] + tRNA(Leu) + H(+). It catalyses the reaction L-phenylalanyl-tRNA(Phe) + an N-terminal L-alpha-aminoacyl-[protein] = an N-terminal L-phenylalanyl-L-alpha-aminoacyl-[protein] + tRNA(Phe). Its function is as follows. Functions in the N-end rule pathway of protein degradation where it conjugates Leu, Phe and, less efficiently, Met from aminoacyl-tRNAs to the N-termini of proteins containing an N-terminal arginine or lysine. This Rhizobium meliloti (strain 1021) (Ensifer meliloti) protein is Leucyl/phenylalanyl-tRNA--protein transferase.